The primary structure comprises 1379 residues: DNA-directed RNA polymerase subunit beta (1379 aa).

This sequence belongs to the RNA polymerase beta chain family. In terms of assembly, the RNAP catalytic core consists of 2 alpha, 1 beta, 1 beta' and 1 omega subunit. When a sigma factor is associated with the core the holoenzyme is formed, which can initiate transcription.

The catalysed reaction is RNA(n) + a ribonucleoside 5'-triphosphate = RNA(n+1) + diphosphate. Functionally, DNA-dependent RNA polymerase catalyzes the transcription of DNA into RNA using the four ribonucleoside triphosphates as substrates. In Rhizobium etli (strain ATCC 51251 / DSM 11541 / JCM 21823 / NBRC 15573 / CFN 42), this protein is DNA-directed RNA polymerase subunit beta.